A 312-amino-acid polypeptide reads, in one-letter code: Porphobilinogen deaminase (312 aa).

C243 is modified (S-(dipyrrolylmethanemethyl)cysteine).

The protein belongs to the HMBS family. Monomer. It depends on dipyrromethane as a cofactor.

The catalysed reaction is 4 porphobilinogen + H2O = hydroxymethylbilane + 4 NH4(+). It participates in porphyrin-containing compound metabolism; protoporphyrin-IX biosynthesis; coproporphyrinogen-III from 5-aminolevulinate: step 2/4. Its function is as follows. Tetrapolymerization of the monopyrrole PBG into the hydroxymethylbilane pre-uroporphyrinogen in several discrete steps. This is Porphobilinogen deaminase from Vibrio vulnificus (strain CMCP6).